The chain runs to 255 residues: 2,3-dehydroadipyl-CoA hydratase (255 aa).

The protein belongs to the enoyl-CoA hydratase/isomerase family.

The enzyme catalyses a (3S)-3-hydroxyacyl-CoA = a (2E)-enoyl-CoA + H2O. It carries out the reaction a 4-saturated-(3S)-3-hydroxyacyl-CoA = a (3E)-enoyl-CoA + H2O. Its pathway is aromatic compound metabolism; phenylacetate degradation. Its function is as follows. Catalyzes the reversible conversion of enzymatically produced 2,3-dehydroadipyl-CoA into 3-hydroxyadipyl-CoA. The sequence is that of 2,3-dehydroadipyl-CoA hydratase (paaF) from Escherichia coli (strain K12).